A 354-amino-acid polypeptide reads, in one-letter code: Rhodopsin (354 aa).

Over 1–36 (MNGTEGPYFYIPMVNTTGIVRSPYDYPQYYLVNPAA) the chain is Extracellular. Residues asparagine 2 and asparagine 15 are each glycosylated (N-linked (GlcNAc...) asparagine). Residues 37-61 (YAALGAYMFFLILVGFPINFLTLYV) traverse the membrane as a helical segment. Residues 62–73 (TIEHKKLRTPLN) are Cytoplasmic-facing. The chain crosses the membrane as a helical span at residues 74–96 (YILLNLAVANLFMVFGGFTTTMY). Over 97–110 (TSMHGYFVLGRLGC) the chain is Extracellular. Cysteine 110 and cysteine 187 are disulfide-bonded. A helical membrane pass occupies residues 111–133 (NLEGFFATLGGEIALWSLVVLAV). Residues 134-136 (ERW) carry the 'Ionic lock' involved in activated form stabilization motif. Topologically, residues 134–152 (ERWMVVCKPISNFRFGENH) are cytoplasmic. The chain crosses the membrane as a helical span at residues 153 to 173 (AIMGLAMTWLMASACAVPPLV). Topologically, residues 174–202 (GWSRYIPEGMQCSCGVDYYTRAEGFNNES) are extracellular. The N-linked (GlcNAc...) asparagine glycan is linked to asparagine 200. A helical transmembrane segment spans residues 203-224 (FVVYMFCCHFMIPLIIVFFCYG). Over 225 to 252 (RLLCAVKEAAAAQQESETTQRAEREVTR) the chain is Cytoplasmic. A helical membrane pass occupies residues 253–274 (MVVIMVIAFLVCWLPYASVAWW). The Extracellular portion of the chain corresponds to 275 to 286 (IFTHQGSEFGPV). A helical membrane pass occupies residues 287 to 308 (FMTIPAFFAKSSSIYNPMIYIC). Residue lysine 296 is modified to N6-(retinylidene)lysine. The Cytoplasmic portion of the chain corresponds to 309 to 354 (MNKQFRNCMITTLCCGKNPFEEEEGASSTASKTEASSVSSSSVSPA). 2 S-palmitoyl cysteine lipidation sites follow: cysteine 322 and cysteine 323. A disordered region spans residues 329–354 (EEEEGASSTASKTEASSVSSSSVSPA). A compositionally biased stretch (low complexity) spans 334-354 (ASSTASKTEASSVSSSSVSPA).

It belongs to the G-protein coupled receptor 1 family. Opsin subfamily. Post-translationally, phosphorylated on some or all of the serine and threonine residues present in the C-terminal region. Contains one covalently linked retinal chromophore.

Its subcellular location is the membrane. The protein localises to the cell projection. The protein resides in the cilium. It is found in the photoreceptor outer segment. Its function is as follows. Photoreceptor required for image-forming vision at low light intensity. While most salt water fish species use retinal as chromophore, most freshwater fish use 3-dehydroretinal, or a mixture of retinal and 3-dehydroretinal. Light-induced isomerization of 11-cis to all-trans retinal triggers a conformational change that activates signaling via G-proteins. Subsequent receptor phosphorylation mediates displacement of the bound G-protein alpha subunit by arrestin and terminates signaling. This chain is Rhodopsin (rho), found in Mullus surmuletus (Striped red mullet).